A 168-amino-acid chain; its full sequence is Ribulose bisphosphate carboxylase small subunit, chloroplastic (168 aa).

A chloroplast-targeting transit peptide spans 1–28; it reads MASIAAKSVSLRAATRRAAPVAAPADAR.

Belongs to the RuBisCO small chain family. Heterohexadecamer of 8 large and 8 small subunits.

It is found in the plastid. The protein localises to the chloroplast. Its function is as follows. RuBisCO catalyzes two reactions: the carboxylation of D-ribulose 1,5-bisphosphate, the primary event in carbon dioxide fixation, as well as the oxidative fragmentation of the pentose substrate. Both reactions occur simultaneously and in competition at the same active site. Although the small subunit is not catalytic it is essential for maximal activity. This Chlamydomonas moewusii (Chlamydomonas eugametos) protein is Ribulose bisphosphate carboxylase small subunit, chloroplastic.